The chain runs to 308 residues: Ribosomal RNA small subunit methyltransferase H (308 aa).

S-adenosyl-L-methionine-binding positions include 33–35 (GGH), Asp-52, Tyr-81, Asp-99, and Gln-106.

It belongs to the methyltransferase superfamily. RsmH family.

Its subcellular location is the cytoplasm. The enzyme catalyses cytidine(1402) in 16S rRNA + S-adenosyl-L-methionine = N(4)-methylcytidine(1402) in 16S rRNA + S-adenosyl-L-homocysteine + H(+). In terms of biological role, specifically methylates the N4 position of cytidine in position 1402 (C1402) of 16S rRNA. This Francisella philomiragia subsp. philomiragia (strain ATCC 25017 / CCUG 19701 / FSC 153 / O#319-036) protein is Ribosomal RNA small subunit methyltransferase H.